Consider the following 1033-residue polypeptide: Translation initiation factor IF-2 (1033 aa).

The interval 49–432 (AFQQGGGNGR…APSVGGVMLP (384 aa)) is disordered. Residues 59 to 113 (SAGRPAAPKKAAPRPSAPSPAQAGPSQAAPAAGDRAAAPRPSAAPKAPAAQQPAA) show a composition bias toward low complexity. Composition is skewed to pro residues over residues 114–140 (PSAP…PAPA) and 148–164 (PAAP…PSGP). The span at 171–189 (PGAPKPGGARPSGPGQDRG) shows a compositional bias: low complexity. A compositionally biased stretch (gly residues) spans 190 to 201 (QQGGQGRPGGQR). Pro residues predominate over residues 236–246 (APRPQGGPRPG). Residues 247 to 268 (GPGGAPGGGPRPQGPGGQGGGP) are compositionally biased toward gly residues. Residues 305-314 (MMPQRPAAGP) are compositionally biased toward low complexity. Positions 318–401 (PGGGGRGPGG…GTQGAFGRPG (84 aa)) are enriched in gly residues. Residues 405–414 (RRGRKSKRQR) show a composition bias toward basic residues. Positions 526 to 698 (VRPPVVTVMG…VVLTADASLD (173 aa)) constitute a tr-type G domain. The G1 stretch occupies residues 535 to 542 (GHVDHGKT). Residue 535–542 (GHVDHGKT) coordinates GTP. Residues 560 to 564 (GITQH) are G2. Positions 585-588 (DTPG) are G3. GTP-binding positions include 585–589 (DTPGH) and 639–642 (NKID). Positions 639 to 642 (NKID) are G4. Residues 675–677 (SAK) form a G5 region.

This sequence belongs to the TRAFAC class translation factor GTPase superfamily. Classic translation factor GTPase family. IF-2 subfamily.

The protein resides in the cytoplasm. Functionally, one of the essential components for the initiation of protein synthesis. Protects formylmethionyl-tRNA from spontaneous hydrolysis and promotes its binding to the 30S ribosomal subunits. Also involved in the hydrolysis of GTP during the formation of the 70S ribosomal complex. The polypeptide is Translation initiation factor IF-2 (Streptomyces coelicolor (strain ATCC BAA-471 / A3(2) / M145)).